A 417-amino-acid chain; its full sequence is NADH-quinone oxidoreductase subunit D (417 aa).

The protein belongs to the complex I 49 kDa subunit family. NDH-1 is composed of 14 different subunits. Subunits NuoB, C, D, E, F, and G constitute the peripheral sector of the complex.

It localises to the cell inner membrane. It catalyses the reaction a quinone + NADH + 5 H(+)(in) = a quinol + NAD(+) + 4 H(+)(out). NDH-1 shuttles electrons from NADH, via FMN and iron-sulfur (Fe-S) centers, to quinones in the respiratory chain. The immediate electron acceptor for the enzyme in this species is believed to be ubiquinone. Couples the redox reaction to proton translocation (for every two electrons transferred, four hydrogen ions are translocated across the cytoplasmic membrane), and thus conserves the redox energy in a proton gradient. This chain is NADH-quinone oxidoreductase subunit D, found in Burkholderia ambifaria (strain MC40-6).